The chain runs to 198 residues: MDSLLMKQRKFLYHFKNVRWAKGRHETYLCYVVKRRDSATSFSLDFGHLRNKSGCHVELLFLRYISDWDLDPGRCYRVTWFTSWSPCYDCARHVADFLRGYPNLSLRIFAARLYFCEDRKAEPEGLRRLHRAGVQIAIMTFKDYFYCWNTFVENREKTFKAWEGLHENSVRLSRQLRRILLPLYEVDDLRDAFRTLGL.

Residues Met1–Cys30 carry the Bipartite nuclear localization signal motif. The tract at residues Asp2 to Glu26 is interaction with SUPT6H. Residues Gly23 to Leu129 enclose the CMP/dCMP-type deaminase domain. Thr27 bears the Phosphothreonine; by PKA mark. Ser38 carries the phosphoserine; by PKA modification. Residues Ala39–Phe42 form an important for interaction with CTNNBL1 region. Residue His56 participates in Zn(2+) binding. The Proton donor role is filled by Glu58. Residues Cys87 and Cys90 each contribute to the Zn(2+) site. Residues Tyr88–Cys116 form a required for interaction with RNF126 region. Residues Leu183 to Leu198 carry the Nuclear export signal motif.

It belongs to the cytidine and deoxycytidylate deaminase family. In terms of assembly, interacts with CTNNBL1; the interaction is important for the immunoglobulin switch activity of AICDA. Interacts (via its NLS) with KPNA1. Interacts with PKA/PRKACA and PRKAR1A/PKR1. Interacts with SUPT6H, TRIM28 and NCL. Directly interacts with MCM3AP; this interaction may favor AICDA recruitment to immunoglobulin variable region genes, hence promoting somatic hypermutations. The cofactor is Zn(2+). In terms of processing, ser-38 is the major site whereas Thr-27 is the minor site of phosphorylation. Phosphorylation regulates its class-switch recombination activity. Probably monoubiquitinated on several residues by RNF126. In terms of tissue distribution, expressed in thymus, lung, spleen, kidney, small intestine, lymph node and tonsil.

It localises to the nucleus. The protein localises to the cytoplasm. It carries out the reaction a 2'-deoxycytidine in single-stranded DNA + H2O + H(+) = a 2'-deoxyuridine in single-stranded DNA + NH4(+). Functionally, single-stranded DNA-specific cytidine deaminase. Involved in somatic hypermutation (SHM), gene conversion, and class-switch recombination (CSR) in B-lymphocytes by deaminating C to U during transcription of Ig-variable (V) and Ig-switch (S) region DNA. Required for several crucial steps of B-cell terminal differentiation necessary for efficient antibody responses. May also play a role in the epigenetic regulation of gene expression by participating in DNA demethylation. This chain is Single-stranded DNA cytosine deaminase (AICDA), found in Canis lupus familiaris (Dog).